The sequence spans 109 residues: UPF0122 protein CLL_A1244 (109 aa).

The protein belongs to the UPF0122 family.

In terms of biological role, might take part in the signal recognition particle (SRP) pathway. This is inferred from the conservation of its genetic proximity to ftsY/ffh. May be a regulatory protein. This is UPF0122 protein CLL_A1244 from Clostridium botulinum (strain Eklund 17B / Type B).